Consider the following 320-residue polypeptide: Polynucleotide 5'-triphosphatase CTL1 (320 aa).

Over residues 1–12 (MSDQPETPSNSR) the composition is skewed to polar residues. The disordered stretch occupies residues 1–23 (MSDQPETPSNSRNSHENVGAKKA). Positions 13-23 (NSHENVGAKKA) are enriched in basic and acidic residues.

Belongs to the fungal TPase family. The cofactor is Mg(2+). Mn(2+) is required as a cofactor.

The protein resides in the cytoplasm. It is found in the nucleus. The catalysed reaction is a 5'-end triphospho-ribonucleoside in mRNA + H2O = a 5'-end diphospho-ribonucleoside in mRNA + phosphate + H(+). Probably involved in an RNA processing event other than mRNA capping. Releases gamma-phosphate from the 5'-end of RNA to produce a diphosphate terminus. This Saccharomyces cerevisiae (strain ATCC 204508 / S288c) (Baker's yeast) protein is Polynucleotide 5'-triphosphatase CTL1.